The sequence spans 265 residues: uncharacterized protein (265 aa).

The interval 233 to 265 (STACGSDQRPTRLPRASCSSRSISGSAARPWKR) is disordered. Residues 247-265 (RASCSSRSISGSAARPWKR) are compositionally biased toward low complexity.

This is an uncharacterized protein from Escherichia coli.